We begin with the raw amino-acid sequence, 1579 residues long: DNA-directed RNA polymerase subunit beta' (1579 aa).

4 residues coordinate Zn(2+): Cys65, Cys67, Cys80, and Cys83. Mg(2+) contacts are provided by Asp601, Asp603, and Asp605. 4 residues coordinate Zn(2+): Cys938, Cys1012, Cys1019, and Cys1022.

This sequence belongs to the RNA polymerase beta' chain family. The RNAP catalytic core consists of 2 alpha, 1 beta, 1 beta' and 1 omega subunit. When a sigma factor is associated with the core the holoenzyme is formed, which can initiate transcription. The cofactor is Mg(2+). It depends on Zn(2+) as a cofactor.

It catalyses the reaction RNA(n) + a ribonucleoside 5'-triphosphate = RNA(n+1) + diphosphate. Functionally, DNA-dependent RNA polymerase catalyzes the transcription of DNA into RNA using the four ribonucleoside triphosphates as substrates. The protein is DNA-directed RNA polymerase subunit beta' of Sulfurihydrogenibium sp. (strain YO3AOP1).